Consider the following 463-residue polypeptide: Putative dipeptidase YtjP (463 aa).

Zn(2+) is bound at residue histidine 85. The active site involves aspartate 87. Aspartate 116 provides a ligand contact to Zn(2+). The Proton acceptor role is filled by glutamate 150. The Zn(2+) site is built by glutamate 151, aspartate 174, and histidine 436.

This sequence belongs to the peptidase M20A family. Zn(2+) serves as cofactor.

The chain is Putative dipeptidase YtjP (ytjP) from Bacillus subtilis (strain 168).